The chain runs to 320 residues: Protein LATERAL ROOT PRIMORDIUM 1 (320 aa).

The segment at 90–110 is disordered; the sequence is QTTVGTSSNNSGSGSGASGTA. Positions 112, 115, 123, 128, 132, and 139 each coordinate Zn(2+). The segment at residues 112–139 is a DNA-binding region (zn(2)-C6 fungal-type; degenerate); the sequence is CQDCGNQAKKECKQRRCRTCCKSRGFDC. A disordered region spans residues 150 to 223; the sequence is AARRRERQVM…QDGGGSREAW (74 aa). The span at 168–177 shows a compositional bias: low complexity; the sequence is GSSLSTSSGT. The segment covering 193–214 has biased composition (polar residues); sequence ATSHTSTSNTPPQSFETSSSRQ. A Required for homo- and heterodimerization motif is present at residues 256-259; sequence IGGH.

Belongs to the SHI protein family. In terms of assembly, homodimer. In terms of tissue distribution, restricted to lateral root primordia.

Its subcellular location is the nucleus. Functionally, transcription activator that binds DNA on 5'-ACTCTAC-3' and promotes auxin homeostasis-regulating gene expression (e.g. YUC genes), as well as genes affecting stamen development, cell expansion and timing of flowering. Synergistically with other SHI-related proteins, regulates gynoecium, stamen and leaf development in a dose-dependent manner, controlling apical-basal patterning. Promotes style and stigma formation, and influence vascular development during gynoecium development. May also have a role in the formation and/or maintenance of the shoot apical meristem (SAM). Modulates root growth. This chain is Protein LATERAL ROOT PRIMORDIUM 1 (LRP1), found in Arabidopsis thaliana (Mouse-ear cress).